A 574-amino-acid chain; its full sequence is Craniofacial development protein 2 (574 aa).

5 stretches are compositionally biased toward basic and acidic residues: residues 1–16, 23–37, 45–55, 86–111, and 134–172; these read MEEV…KAED, ECHE…KEDE, EQTKGIKRKAE, SEKE…KEDE, and TGEE…DRQQ. Disordered stretches follow at residues 1-222 and 488-574; these read MEEV…PAVD and TRPF…SGVF. Polar residues predominate over residues 199-208; that stretch reads KTGTNASSKN. The tract at residues 493–572 is hydrophilic; the sequence is GTNEADDTSE…AVPSLPAGSG (80 aa). A compositionally biased stretch (basic and acidic residues) spans 502–516; sequence EESKPSSEQKGKEKP. Over residues 518 to 528 the composition is skewed to low complexity; sequence ASVPSAVSSVP.

The protein localises to the cytoplasm. It localises to the nucleus. This chain is Craniofacial development protein 2 (CFDP2), found in Tragulus javanicus (Lesser Malay chevrotain).